Consider the following 522-residue polypeptide: tRNA-2-methylthio-N(6)-dimethylallyladenosine synthase (522 aa).

One can recognise an MTTase N-terminal domain in the interval 24–140 (RTYEVKTYGC…LPTLLQRAEH (117 aa)). Residues C33, C69, C103, C177, C181, and C184 each contribute to the [4Fe-4S] cluster site. Residues 163–399 (RESAYAGWVS…MVVQEQVCEE (237 aa)) enclose the Radical SAM core domain. The TRAM domain occupies 402–473 (QKLIGTTVEL…PFFLIADSGV (72 aa)).

The protein belongs to the methylthiotransferase family. MiaB subfamily. In terms of assembly, monomer. [4Fe-4S] cluster serves as cofactor.

The protein localises to the cytoplasm. It catalyses the reaction N(6)-dimethylallyladenosine(37) in tRNA + (sulfur carrier)-SH + AH2 + 2 S-adenosyl-L-methionine = 2-methylsulfanyl-N(6)-dimethylallyladenosine(37) in tRNA + (sulfur carrier)-H + 5'-deoxyadenosine + L-methionine + A + S-adenosyl-L-homocysteine + 2 H(+). In terms of biological role, catalyzes the methylthiolation of N6-(dimethylallyl)adenosine (i(6)A), leading to the formation of 2-methylthio-N6-(dimethylallyl)adenosine (ms(2)i(6)A) at position 37 in tRNAs that read codons beginning with uridine. This is tRNA-2-methylthio-N(6)-dimethylallyladenosine synthase from Corynebacterium glutamicum (strain ATCC 13032 / DSM 20300 / JCM 1318 / BCRC 11384 / CCUG 27702 / LMG 3730 / NBRC 12168 / NCIMB 10025 / NRRL B-2784 / 534).